We begin with the raw amino-acid sequence, 302 residues long: uncharacterized protein (302 aa).

Disordered regions lie at residues 81–100, 155–209, and 269–302; these read ETSD…ERAA, TVTG…PVNP, and LRIE…ALLN. The segment covering 196 to 209 has biased composition (low complexity); sequence PSLPSSLVSSPVNP.

This is an uncharacterized protein from Ictalurid herpesvirus 1 (strain Auburn) (IcHV-1).